The primary structure comprises 430 residues: Cytochrome P450 monooxygenase FGSG_15680 (430 aa).

Position 351 (Cys-351) interacts with heme.

It belongs to the cytochrome P450 family. It depends on heme as a cofactor.

The protein operates within mycotoxin biosynthesis. In terms of biological role, cytochrome P450 monooxygenase; part of the gene cluster that mediates the biosynthesis of gramillins A and B, bicyclic lipopeptides that induce cell death in maize leaves but not in wheat leaves. The nonribosomal peptide synthetase GRA1 incorporates respectively a glutamic adic (Glu), a leucine (Leu), a serine (Ser), a hydroxyglutamine (HOGln), a 2-amino decanoic acid, and 2 cysteins (CysB and CysA). The biosynthesis of 2-amino decanoic acid incorporated in gramillins could be initiated by a fatty acid synthase composed of the alpha and beta subunits FGSG_00036 and FGSG_11656. The cytochrome P450 monooxygenase FGSG_15680 could hydroxylate the fatty acid chain. Subsequent oxidation to the ketone by the oxidoreductase FGSG_00048 and transamination by aminotransferase FGSG_00049 could form 2-amino-decanoic acid. On the other hand, FGSG_15680 could also be responsible for the HO-modified glutamine at the gamma-position. Whether hydroxylation occurs on the fully assembled product or on the Gln residue prior to assembly into the gramillins requires further proof. The thioredoxin FGSG_00043 could also be required for the disulfide-bond formation between CysA and CysB. The specific involvement of the remaining proteins from the cluster is more difficult to discern, but could have broader regulatory (FGSG_00040 and FGSG_11657) or enzymatic functions (FGSG_00044 and FGSG_00045). The final C-domain of GRA1 does not possess the expected sequence of a termination CT domain, often implicated in macrocyclization and release of a cyclopeptidein fungal NRPs; and the thioesterase FGSG_00047 may act in concert with the terminal C-domain of GRA1 to catalyze the formation of the macrocyclic anhydride and release of the products. The sequence is that of Cytochrome P450 monooxygenase FGSG_15680 from Gibberella zeae (strain ATCC MYA-4620 / CBS 123657 / FGSC 9075 / NRRL 31084 / PH-1) (Wheat head blight fungus).